Reading from the N-terminus, the 417-residue chain is Serine hydroxymethyltransferase (417 aa).

Residues leucine 120 and 124–126 contribute to the (6S)-5,6,7,8-tetrahydrofolate site; that span reads GHL. Position 229 is an N6-(pyridoxal phosphate)lysine (lysine 229).

This sequence belongs to the SHMT family. Homodimer. The cofactor is pyridoxal 5'-phosphate.

The protein resides in the cytoplasm. It catalyses the reaction (6R)-5,10-methylene-5,6,7,8-tetrahydrofolate + glycine + H2O = (6S)-5,6,7,8-tetrahydrofolate + L-serine. It functions in the pathway one-carbon metabolism; tetrahydrofolate interconversion. It participates in amino-acid biosynthesis; glycine biosynthesis; glycine from L-serine: step 1/1. Its function is as follows. Catalyzes the reversible interconversion of serine and glycine with tetrahydrofolate (THF) serving as the one-carbon carrier. This reaction serves as the major source of one-carbon groups required for the biosynthesis of purines, thymidylate, methionine, and other important biomolecules. Also exhibits THF-independent aldolase activity toward beta-hydroxyamino acids, producing glycine and aldehydes, via a retro-aldol mechanism. In Anaeromyxobacter sp. (strain K), this protein is Serine hydroxymethyltransferase.